Reading from the N-terminus, the 41-residue chain is Photosystem I reaction center subunit IX (41 aa).

A helical transmembrane segment spans residues 7–29 (YLSTAPVLLTVWLSITASGIMII).

This sequence belongs to the PsaJ family.

Its subcellular location is the plastid. The protein localises to the chloroplast thylakoid membrane. In terms of biological role, may help in the organization of the PsaE and PsaF subunits. The chain is Photosystem I reaction center subunit IX from Heterosigma akashiwo (strain NIES-293 / 8280G21-1).